We begin with the raw amino-acid sequence, 307 residues long: MLKSGVMVASLCLFSVPSRAAVPAPGDKFELSGWSLSVPVDSDNDGKADQIKEKTLAAGYRNSDFFTLSDAGGMVFKAPISGAKTSKNTTYTRSELREMLRKGDTSIATQGVSRNNWVLSSAPLSEQKKAGGVDGTLEATLSVDHVTTTGVNWQVGRVIIGQIHANNDEPIRLYYRKLPHHQKGSVYFAHEPRKGFGDEQWYEMIGTLQPSHGNQTAAPTEPEAGIALGETFSYRIDATGNKLTVTLMREGRPDVVKTVDMSKSGYSEAGQYLYFKAGVYNQNKTGKPDDYVQATFYRLKATHGAQR.

The signal sequence occupies residues 1–20; that stretch reads MLKSGVMVASLCLFSVPSRA.

The protein belongs to the polysaccharide lyase 7 family.

The protein resides in the secreted. It carries out the reaction Eliminative cleavage of alginate to give oligosaccharides with 4-deoxy-alpha-L-erythro-hex-4-enuronosyl groups at their non-reducing ends and beta-D-mannuronate at their reducing end.. Its function is as follows. Degrades alginates that contain guluronic acid. This is Alginate lyase (alyA) from Klebsiella pneumoniae.